The sequence spans 495 residues: NADH-ubiquinone oxidoreductase chain 4 (495 aa).

Helical transmembrane passes span 9 to 29, 39 to 59, 89 to 109, 118 to 138, 139 to 159, 173 to 193, 214 to 234, 245 to 265, 272 to 292, 313 to 333, 335 to 355, 367 to 387, 388 to 408, 413 to 433, and 457 to 477; these read YFDLSGLILCPVLGSIILLFI, LIGLCVSLITFLYSLVLWIQF, LSLFFVILTTFLIPICILVGW, EYIIAFLICEFLMIAVFCMLD, LLLFYVFFESVLIPMFIIIGV, FFLYTLLGSVFMLLAILLILL, ILLWIAFFASFAVKVPMVPVH, PTAGSVILAGILLKLGTYGFL, FPEATLCFTPFIYTLSAIAII, VAHMNLVTIGMFSLNIQGIGG, ILLMLSHGLVSSALFLCVGVL, YGGLVSTMPNFSTIFFFFTLA, NMSLPGTSSFIGEFLILVGAF, LVATLRALGMILGAAYSLWLY, and VFIFLPFLVGVVWMGVYPKVF.

Belongs to the complex I subunit 4 family.

It localises to the mitochondrion membrane. The enzyme catalyses a ubiquinone + NADH + 5 H(+)(in) = a ubiquinol + NAD(+) + 4 H(+)(out). Functionally, core subunit of the mitochondrial membrane respiratory chain NADH dehydrogenase (Complex I) that is believed to belong to the minimal assembly required for catalysis. Complex I functions in the transfer of electrons from NADH to the respiratory chain. The immediate electron acceptor for the enzyme is believed to be ubiquinone. This Triticum aestivum (Wheat) protein is NADH-ubiquinone oxidoreductase chain 4 (ND4).